Here is a 953-residue protein sequence, read N- to C-terminus: Mannosylglycoprotein endo-beta-mannosidase (953 aa).

E461 acts as the Proton donor in catalysis. E553 acts as the Nucleophile in catalysis.

It belongs to the glycosyl hydrolase 2 family. As to quaternary structure, heterotrimer of 31 kDa, 28 kDa and 42 kDa subunits. The mature enzyme is proteotically cleaved into 3 subunits of 31 kDa, 28 kDa and 42 kDa. As to expression, ubiquitously expressed.

The catalysed reaction is Hydrolysis of the alpha-D-mannosyl-(1-&gt;6)-beta-D-mannosyl-(1-&gt;4)-N-acetyl-beta-D-glucosaminyl-(1-&gt;4)-N-acetyl-beta-D-glucosaminyl sequence of glycoprotein to alpha-D-mannosyl-(1-&gt;6)-D-mannose and N-acetyl-beta-D-glucosaminyl-(1-&gt;4)-N-acetyl-beta-D-glucosaminyl sequences.. Its function is as follows. Glycosidase that specifically hydrolyzes the Man-beta-1,4-GlcNAc linkage in the trimannosyl core structure of N-glycans. Does not hydrolyzes pyridylamino derivatives sugar chains containing Man-alpha-1,3-Man-beta or Xylose-beta-1,2-Man-beta. This is Mannosylglycoprotein endo-beta-mannosidase (EBM) from Lilium longiflorum (Trumpet lily).